The primary structure comprises 404 residues: Arginine biosynthesis bifunctional protein ArgJ (404 aa).

Residues T166, K189, T200, E280, N399, and S404 each contribute to the substrate site. T200 (nucleophile) is an active-site residue.

It belongs to the ArgJ family. In terms of assembly, heterotetramer of two alpha and two beta chains.

Its subcellular location is the cytoplasm. The enzyme catalyses N(2)-acetyl-L-ornithine + L-glutamate = N-acetyl-L-glutamate + L-ornithine. The catalysed reaction is L-glutamate + acetyl-CoA = N-acetyl-L-glutamate + CoA + H(+). The protein operates within amino-acid biosynthesis; L-arginine biosynthesis; L-ornithine and N-acetyl-L-glutamate from L-glutamate and N(2)-acetyl-L-ornithine (cyclic): step 1/1. It functions in the pathway amino-acid biosynthesis; L-arginine biosynthesis; N(2)-acetyl-L-ornithine from L-glutamate: step 1/4. Catalyzes two activities which are involved in the cyclic version of arginine biosynthesis: the synthesis of N-acetylglutamate from glutamate and acetyl-CoA as the acetyl donor, and of ornithine by transacetylation between N(2)-acetylornithine and glutamate. The polypeptide is Arginine biosynthesis bifunctional protein ArgJ (Mycobacterium bovis (strain ATCC BAA-935 / AF2122/97)).